Here is a 1111-residue protein sequence, read N- to C-terminus: Lon protease homolog, mitochondrial (1111 aa).

The transit peptide at 1–21 (MLRSSRSRLVTRNILLRQFKN) directs the protein to the mitochondrion. Disordered regions lie at residues 85–177 (IQLK…AKQP) and 288–311 (PPTSEQNLKDESDVSKSEGVENNE). Residues 88 to 125 (KQDDKGKDIDQPESENRKKEEEQVPTEEKDNDTAKESE) are compositionally biased toward basic and acidic residues. The span at 126–135 (TSQQRDSVAE) shows a compositional bias: polar residues. The segment covering 145–167 (GASGNGESSGNGSGDDGNNGSGN) has biased composition (gly residues). The 266-residue stretch at 185 to 450 (VMALPISRRP…KALTVLKKEL (266 aa)) folds into the Lon N-terminal domain. Residues 294 to 306 (NLKDESDVSKSEG) show a composition bias toward basic and acidic residues. 602-609 (GPPGVGKT) serves as a coordination point for ATP. 2 stretches are compositionally biased toward basic and acidic residues: residues 819-835 (ENEEVKDQKDIKVKQSE) and 853-865 (ELIKTQKSHDNKG). The interval 819-866 (ENEEVKDQKDIKVKQSENKSSAEASTVESTTEENELIKTQKSHDNKGS) is disordered. Residues 899–1085 (STPPGVVMGL…EDVFQRLFGD (187 aa)) enclose the Lon proteolytic domain. Catalysis depends on residues Ser991 and Lys1034.

This sequence belongs to the peptidase S16 family. In terms of assembly, homohexamer or homoheptamer. Organized in a ring with a central cavity.

It is found in the mitochondrion matrix. The catalysed reaction is Hydrolysis of proteins in presence of ATP.. In terms of biological role, ATP-dependent serine protease that mediates the selective degradation of misfolded, unassembled or oxidatively damaged polypeptides as well as certain short-lived regulatory proteins in the mitochondrial matrix. May also have a chaperone function in the assembly of inner membrane protein complexes. Participates in the regulation of mitochondrial gene expression and in the maintenance of the integrity of the mitochondrial genome. Binds to mitochondrial DNA in a site-specific manner. The chain is Lon protease homolog, mitochondrial from Kluyveromyces lactis (strain ATCC 8585 / CBS 2359 / DSM 70799 / NBRC 1267 / NRRL Y-1140 / WM37) (Yeast).